A 178-amino-acid polypeptide reads, in one-letter code: Large ribosomal subunit protein uL6 (178 aa).

It belongs to the universal ribosomal protein uL6 family. Part of the 50S ribosomal subunit.

This protein binds to the 23S rRNA, and is important in its secondary structure. It is located near the subunit interface in the base of the L7/L12 stalk, and near the tRNA binding site of the peptidyltransferase center. The chain is Large ribosomal subunit protein uL6 from Corynebacterium urealyticum (strain ATCC 43042 / DSM 7109).